Here is a 160-residue protein sequence, read N- to C-terminus: Serine-protein kinase RsbW (160 aa).

This sequence belongs to the anti-sigma-factor family.

It catalyses the reaction L-seryl-[protein] + ATP = O-phospho-L-seryl-[protein] + ADP + H(+). It carries out the reaction L-threonyl-[protein] + ATP = O-phospho-L-threonyl-[protein] + ADP + H(+). Functionally, negative regulator of sigma-B activity. Phosphorylates and inactivates its specific antagonist protein, RsbV. Upon phosphorylation of RsbV, RsbW is released and binds to sigma-B, thereby blocking its ability to form an RNA polymerase holoenzyme (E-sigma-B). In Bacillus cereus (strain B4264), this protein is Serine-protein kinase RsbW.